Reading from the N-terminus, the 466-residue chain is Communesin N16 acyltransferase cnsK (466 aa).

The protein belongs to the fumigaclavine B O-acetyltransferase family.

Its pathway is alkaloid biosynthesis. In terms of biological role, communesin N16 acyltransferase; part of the gene cluster that mediates the biosynthesis of communesins, a prominent class of indole alkaloids with great potential as pharmaceuticals. Communesins are biosynthesized by the coupling of tryptamine and aurantioclavine, two building blocks derived from L-tryptophan. The L-tryptophan decarboxylase cnsB converts L-tryptophan to tryptamine, whereas the tryptophan dimethylallyltransferase cnsF converts L-tryptophan to 4-dimethylallyl tryptophan which is further transformed to aurantioclavine by the aurantioclavine synthase cnsA, probably aided by the catalase cnsD. The cytochrome P450 monooxygenase cnsC catalyzes the heterodimeric coupling between the two different indole moieties, tryptamine and aurantioclavine, to construct vicinal quaternary stereocenters and yield the heptacyclic communesin scaffold. The O-methyltransferase cnsE then methylates the communesin scaffold to produce communesin K, the simplest characterized communesin that contains the heptacyclic core. The dioxygenase cnsJ converts communesin K into communesin I. Acylation to introduce the hexadienyl group at position N16 of communesin I by the acyltransferase cnsK leads to the production of communesin B. The hexadienyl group is produced by the highly reducing polyketide synthase cnsI, before being hydrolytically removed from cnsI by the serine hydrolase cnsH, converted into hexadienyl-CoA by the CoA ligase cnsG, and then transferred to communesin I by cnsK. Surprisingly, cnsK may also be a promiscuous acyltransferase that can tolerate a range of acyl groups, including acetyl-, propionyl-, and butyryl-CoA, which lead to communesins A, G and H respectively. The roles of the alpha-ketoglutarate-dependent dioxygenases cnsM and cnsP have still to be determined. This Penicillium expansum (Blue mold rot fungus) protein is Communesin N16 acyltransferase cnsK.